The following is a 376-amino-acid chain: Chaperone protein DnaJ (376 aa).

The 66-residue stretch at 5 to 70 (DYYEVLGVKK…QKRAAYDQYG (66 aa)) folds into the J domain. The CR-type zinc-finger motif lies at 131-209 (GVTKEIRIPT…CHGHGRVEKS (79 aa)). 8 residues coordinate Zn(2+): Cys-144, Cys-147, Cys-161, Cys-164, Cys-183, Cys-186, Cys-197, and Cys-200. CXXCXGXG motif repeat units lie at residues 144 to 151 (CDVCHGSG), 161 to 168 (CSTCRGAG), 183 to 190 (CPTCHGSG), and 197 to 204 (CNKCHGHG).

This sequence belongs to the DnaJ family. As to quaternary structure, homodimer. Zn(2+) is required as a cofactor.

It is found in the cytoplasm. Its function is as follows. Participates actively in the response to hyperosmotic and heat shock by preventing the aggregation of stress-denatured proteins and by disaggregating proteins, also in an autonomous, DnaK-independent fashion. Unfolded proteins bind initially to DnaJ; upon interaction with the DnaJ-bound protein, DnaK hydrolyzes its bound ATP, resulting in the formation of a stable complex. GrpE releases ADP from DnaK; ATP binding to DnaK triggers the release of the substrate protein, thus completing the reaction cycle. Several rounds of ATP-dependent interactions between DnaJ, DnaK and GrpE are required for fully efficient folding. Also involved, together with DnaK and GrpE, in the DNA replication of plasmids through activation of initiation proteins. The polypeptide is Chaperone protein DnaJ (Yersinia enterocolitica serotype O:8 / biotype 1B (strain NCTC 13174 / 8081)).